The primary structure comprises 460 residues: Putative arginine/ornithine antiporter (460 aa).

The Cytoplasmic portion of the chain corresponds to 1–4 (MEKK). A helical transmembrane segment spans residues 5–25 (LGLSALTALVLSSMLGAGVFS). The Periplasmic segment spans residues 26–38 (LPQNMAAVASPAA). Residues 39–59 (LLIGWGITGAGILLLAFAMLI) traverse the membrane as a helical segment. The Cytoplasmic segment spans residues 60-92 (LTRIRPELDGGIFTYAREGFGELIGFCSAWGYW). Residues 93–113 (LCAVIANVSYLVIVFSALSFF) form a helical membrane-spanning segment. The Periplasmic portion of the chain corresponds to 114 to 125 (TDTPELRLFGDG). The chain crosses the membrane as a helical span at residues 126–146 (NTWQSIVGASALLWIVHFLIL). Over 147–157 (RGVQTAASINL) the chain is Cytoplasmic. A helical membrane pass occupies residues 158–178 (VATLAKLLPLGLFVVLAMMMF). Residues 179 to 201 (KLDTFKLDFTGLALGVPVWEQVK) are Periplasmic-facing. Residues 202-222 (NTMLITLWVFIGVEGAVVVSA) traverse the membrane as a helical segment. Residues 223–235 (RARNKRDVGKATL) are Cytoplasmic-facing. The chain crosses the membrane as a helical span at residues 236-256 (LAVLSALGVYLLVTLLSLGVV). The Periplasmic segment spans residues 257-282 (ARPELAEIRNPSMAGLMVEMMGPWGE). A helical transmembrane segment spans residues 283–303 (IIIAAGLIVSVCGAYLSWTIM). Residues 304 to 331 (AAEVPFLAATHKAFPRIFARQNAQAAPS) are Cytoplasmic-facing. A helical membrane pass occupies residues 332–352 (ASLWLTNICVQICLVLIWLTG). Over 353–357 (SDYNT) the chain is Periplasmic. The chain crosses the membrane as a helical span at residues 358–378 (LLTIASEMILVPYFLVGAFLL). The Cytoplasmic segment spans residues 379-384 (KIATRP). Helical transmembrane passes span 385-405 (LHKA…YASG) and 406-426 (PMHL…FLYA). The Cytoplasmic segment spans residues 427-439 (RKTHTHDNVLNRQ). Residues 440 to 460 (EMVLIGMLLIASVPATWMLVG) form a helical membrane-spanning segment.

This sequence belongs to the amino acid-polyamine-organocation (APC) superfamily. Basic amino acid/polyamine antiporter (APA) (TC 2.A.3.2) family.

It is found in the cell inner membrane. It carries out the reaction L-ornithine(in) + L-arginine(out) = L-ornithine(out) + L-arginine(in). In terms of biological role, catalyzes electroneutral exchange between arginine and ornithine to allow high-efficiency energy conversion in the arginine deiminase pathway. The chain is Putative arginine/ornithine antiporter (ydgI) from Escherichia coli O6:H1 (strain CFT073 / ATCC 700928 / UPEC).